Consider the following 337-residue polypeptide: Large ribosomal subunit protein uL3 (337 aa).

The interval 1–32 (MAKGHRPRRGSLAYSPRKRSQSHIPRFRSWPE) is disordered.

This sequence belongs to the universal ribosomal protein uL3 family. In terms of assembly, part of the 50S ribosomal subunit. Forms a cluster with proteins L14 and L24e.

Its function is as follows. One of the primary rRNA binding proteins, it binds directly near the 3'-end of the 23S rRNA, where it nucleates assembly of the 50S subunit. The sequence is that of Large ribosomal subunit protein uL3 from Methanococcoides burtonii (strain DSM 6242 / NBRC 107633 / OCM 468 / ACE-M).